The following is a 382-amino-acid chain: Anhydro-N-acetylmuramic acid kinase (382 aa).

ATP is bound at residue 9–16; the sequence is GTSLDGID.

The protein belongs to the anhydro-N-acetylmuramic acid kinase family.

The enzyme catalyses 1,6-anhydro-N-acetyl-beta-muramate + ATP + H2O = N-acetyl-D-muramate 6-phosphate + ADP + H(+). It functions in the pathway amino-sugar metabolism; 1,6-anhydro-N-acetylmuramate degradation. Its pathway is cell wall biogenesis; peptidoglycan recycling. Its function is as follows. Catalyzes the specific phosphorylation of 1,6-anhydro-N-acetylmuramic acid (anhMurNAc) with the simultaneous cleavage of the 1,6-anhydro ring, generating MurNAc-6-P. Is required for the utilization of anhMurNAc either imported from the medium or derived from its own cell wall murein, and thus plays a role in cell wall recycling. The sequence is that of Anhydro-N-acetylmuramic acid kinase from Bacillus cereus (strain AH820).